Here is a 71-residue protein sequence, read N- to C-terminus: Phosphatidylinositol N-acetylglucosaminyltransferase subunit Y (71 aa).

Residues 1–5 are Cytoplasmic-facing; the sequence is MIRSL. A helical transmembrane segment spans residues 6–26; the sequence is PTMTVLIPLVSLAGLLYSASV. Residues 27–44 lie on the Lumenal side of the membrane; that stretch reads EEGFPEGCTSASSLCFYS. A helical membrane pass occupies residues 45–65; it reads LLLPVTVPVYVFFHLWTWMGL. Residues 66–71 are Cytoplasmic-facing; that stretch reads KLFRHN.

As to quaternary structure, component of the glycosylphosphatidylinositol-N-acetylglucosaminyltransferase (GPI-GnT) complex composed at least by PIGA, PIGC, PIGH, PIGP, PIGQ, PIGY and DPM2. Interacts directly with PIGA; this interaction regulates glycosylphosphatidylinositol-N-acetylglucosaminyltransferase activity. Does not interact with Ras proteins.

Its subcellular location is the endoplasmic reticulum membrane. It participates in glycolipid biosynthesis; glycosylphosphatidylinositol-anchor biosynthesis. In terms of biological role, part of the glycosylphosphatidylinositol-N-acetylglucosaminyltransferase (GPI-GnT) complex that catalyzes the transfer of N-acetylglucosamine from UDP-N-acetylglucosamine to phosphatidylinositol and participates in the first step of GPI biosynthesis. May act by regulating the catalytic subunit PIGA. The protein is Phosphatidylinositol N-acetylglucosaminyltransferase subunit Y of Mus musculus (Mouse).